A 246-amino-acid chain; its full sequence is Small ribosomal subunit protein uS2 (246 aa).

Belongs to the universal ribosomal protein uS2 family.

The protein is Small ribosomal subunit protein uS2 of Lachnoclostridium phytofermentans (strain ATCC 700394 / DSM 18823 / ISDg) (Clostridium phytofermentans).